The chain runs to 60 residues: Large ribosomal subunit protein bL32 (60 aa).

The protein belongs to the bacterial ribosomal protein bL32 family.

This chain is Large ribosomal subunit protein bL32, found in Geobacter sulfurreducens (strain ATCC 51573 / DSM 12127 / PCA).